A 148-amino-acid polypeptide reads, in one-letter code: Cyanate hydratase (148 aa).

Catalysis depends on residues R89, E92, and S115.

It belongs to the cyanase family.

It catalyses the reaction cyanate + hydrogencarbonate + 3 H(+) = NH4(+) + 2 CO2. Functionally, catalyzes the reaction of cyanate with bicarbonate to produce ammonia and carbon dioxide. The sequence is that of Cyanate hydratase from Sulfurisphaera tokodaii (strain DSM 16993 / JCM 10545 / NBRC 100140 / 7) (Sulfolobus tokodaii).